A 328-amino-acid polypeptide reads, in one-letter code: Tetraacyldisaccharide 4'-kinase (328 aa).

Position 55–62 (55–62) interacts with ATP; it reads TAGGNGKT.

This sequence belongs to the LpxK family.

It catalyses the reaction a lipid A disaccharide + ATP = a lipid IVA + ADP + H(+). It functions in the pathway glycolipid biosynthesis; lipid IV(A) biosynthesis; lipid IV(A) from (3R)-3-hydroxytetradecanoyl-[acyl-carrier-protein] and UDP-N-acetyl-alpha-D-glucosamine: step 6/6. In terms of biological role, transfers the gamma-phosphate of ATP to the 4'-position of a tetraacyldisaccharide 1-phosphate intermediate (termed DS-1-P) to form tetraacyldisaccharide 1,4'-bis-phosphate (lipid IVA). This Escherichia coli O157:H7 protein is Tetraacyldisaccharide 4'-kinase.